We begin with the raw amino-acid sequence, 701 residues long: Elongation factor G (701 aa).

The 283-residue stretch at 8–290 (KRYRNIGICA…AVIEFLPAPD (283 aa)) folds into the tr-type G domain. GTP contacts are provided by residues 17–24 (AHVDAGKT), 88–92 (DTPGH), and 142–145 (NKMD).

Belongs to the TRAFAC class translation factor GTPase superfamily. Classic translation factor GTPase family. EF-G/EF-2 subfamily.

It is found in the cytoplasm. Catalyzes the GTP-dependent ribosomal translocation step during translation elongation. During this step, the ribosome changes from the pre-translocational (PRE) to the post-translocational (POST) state as the newly formed A-site-bound peptidyl-tRNA and P-site-bound deacylated tRNA move to the P and E sites, respectively. Catalyzes the coordinated movement of the two tRNA molecules, the mRNA and conformational changes in the ribosome. The chain is Elongation factor G from Marinobacter nauticus (strain ATCC 700491 / DSM 11845 / VT8) (Marinobacter aquaeolei).